Consider the following 544-residue polypeptide: Cytochrome P450 monooxygenase notG' (544 aa).

Residues 1 to 22 (MELPFSAMSLLYLLVGIAGVIS) form the signal peptide. Helical transmembrane passes span 42 to 62 (WYTL…GLPL) and 66 to 86 (AKAT…SLLL). Asn226 and Asn404 each carry an N-linked (GlcNAc...) asparagine glycan. Cys487 lines the heme pocket.

It belongs to the cytochrome P450 family. Requires heme as cofactor.

Its subcellular location is the membrane. It functions in the pathway alkaloid biosynthesis. Its function is as follows. Cytochrome P450 monooxygenase; part of the gene cluster that mediates the biosynthesis of notoamide, a fungal indole alkaloid that belongs to a family of natural products containing a characteristic bicyclo[2.2.2]diazaoctane core. The first step of notoamide biosynthesis involves coupling of L-proline and L-tryptophan by the bimodular NRPS notE', to produce cyclo-L-tryptophan-L-proline called brevianamide F. The reverse prenyltransferase notF' then acts as a deoxybrevianamide E synthase and converts brevianamide F to deoxybrevianamide E via reverse prenylation at C-2 of the indole ring leading to the bicyclo[2.2.2]diazaoctane core. Deoxybrevianamide E is further hydroxylated at C-6 of the indole ring, likely catalyzed by the cytochrome P450 monooxygenase notG', to yield 6-hydroxy-deoxybrevianamide E. 6-hydroxy-deoxybrevianamide E is a specific substrate of the prenyltransferase notC' for normal prenylation at C-7 to produce 6-hydroxy-7-prenyl-deoxybrevianamide, also called notoamide S. As the proposed pivotal branching point in notoamide biosynthesis, notoamide S can be diverted to notoamide E through an oxidative pyran ring closure putatively catalyzed by either notH' cytochrome P450 monooxygenase or the notD' FAD-linked oxidoreductase. This step would be followed by an indole 2,3-epoxidation-initiated pinacol-like rearrangement catalyzed by the notB' FAD-dependent monooxygenase leading to the formation of notoamide C and notoamide D. On the other hand notoamide S is converted to notoamide T by notH' (or notD'), a bifunctional oxidase that also functions as the intramolecular Diels-Alderase responsible for generation of (-)-notoamide T. To generate antipodal (+)-notoaminide T, notH (or notD) in Aspergillus strain MF297-2 is expected to catalyze a Diels-Alder reaction leading to the opposite stereochemistry. The remaining oxidoreductase notD' (or notH') likely catalyzes the oxidative pyran ring formation to yield (-)-stephacidin A. The FAD-dependent monooxygenase notI' is highly similar to notB' and is predicted to catalyze a similar conversion from (-)-stephacidin A to (+)-notoamide B via the 2,3-epoxidation of (-)-stephacidin A followed by a pinacol-type rearrangement. Finally, it remains unclear which enzyme could be responsible for the final hydroxylation steps leading to notoamide A and sclerotiamide. This chain is Cytochrome P450 monooxygenase notG', found in Aspergillus versicolor.